We begin with the raw amino-acid sequence, 313 residues long: Glucan 1,3-beta-glucosidase (313 aa).

A signal peptide spans 1–23 (MRFSTTLATAATALFFTASQVSA). Glu-124 acts as the Proton donor in catalysis. Asn-202 is a glycosylation site (N-linked (GlcNAc...) asparagine). Catalysis depends on Glu-233, which acts as the Nucleophile. Residue Asn-284 is glycosylated (N-linked (GlcNAc...) asparagine).

Belongs to the glycosyl hydrolase 17 family.

It is found in the secreted. It localises to the cell wall. It carries out the reaction Successive hydrolysis of beta-D-glucose units from the non-reducing ends of (1-&gt;3)-beta-D-glucans, releasing alpha-glucose.. Glucanases possibly play a role in cell expansion during growth, in cell-cell fusion during mating, and in spore release during sporulation. This enzyme may be involved in beta-glucan degradation and also function biosynthetically as a transglycosylase. This Saccharomyces cerevisiae (strain ATCC 204508 / S288c) (Baker's yeast) protein is Glucan 1,3-beta-glucosidase (BGL2).